The sequence spans 140 residues: ATP synthase epsilon chain (140 aa).

The protein belongs to the ATPase epsilon chain family. As to quaternary structure, F-type ATPases have 2 components, CF(1) - the catalytic core - and CF(0) - the membrane proton channel. CF(1) has five subunits: alpha(3), beta(3), gamma(1), delta(1), epsilon(1). CF(0) has three main subunits: a, b and c.

The protein resides in the cell inner membrane. Produces ATP from ADP in the presence of a proton gradient across the membrane. This chain is ATP synthase epsilon chain, found in Yersinia pseudotuberculosis serotype O:1b (strain IP 31758).